Reading from the N-terminus, the 433-residue chain is MALRVTRNSKINAENKAKINMAGAKRVPTAPAATSKPGLRPRTALGDIGNKVSEQLQAKMPMKKEAKPSATGKVIDKKLPKPLEKVPMLVPVPVSEPVPEPEPEPEPEPVKEEKLSPEPILVDTASPSPMETSGCAPAEEDLCQAFSDVILAVNDVDAEDGADPNLCSEYVKDIYAYLRQLEEEQAVRPKYLLGREVTGNMRAILIDWLVQVQMKFRLLQETMYMTVSIIDRFMQNNCVPKKMLQLVGVTAMFIASKYEEMYPPEIGDFAFVTDNTYTKHQIRQMEMKILRALNFGLGRPLPLHFLRRASKIGEVDVEQHTLAKYLMELTMLDYDMVHFPPSQIAAGAFCLALKILDNGEWTPTLQHYLSYTEESLLPVMQHLAKNVVMVNQGLTKHMTVKNKYATSKHAKISTLPQLNSALVQDLAKAVAKV.

The disordered stretch occupies residues 19 to 47; the sequence is INMAGAKRVPTAPAATSKPGLRPRTALGD. Lys-73 is subject to N6-acetyllysine. A disordered region spans residues 93-116; it reads PVSEPVPEPEPEPEPEPVKEEKLS. Ser-126 bears the Phosphoserine; by CDK1 mark. Position 128 is a phosphoserine (Ser-128). At Ser-133 the chain carries Phosphoserine; by PLK1. Position 147 is a phosphoserine (Ser-147). Interaction with CDK2 stretches follow at residues 169–177 and 258–261; these read EYVKDIYAY and YEEM. Position 321 is a phosphothreonine (Thr-321).

It belongs to the cyclin family. Cyclin AB subfamily. As to quaternary structure, interacts with the CDC2 protein kinase to form a serine/threonine kinase holoenzyme complex also known as maturation promoting factor (MPF). The cyclin subunit imparts substrate specificity to the complex. Binds HEI10. Interacts with catalytically active RALBP1 and CDC2 during mitosis to form an endocytotic complex during interphase. Interacts with CCNF; interaction is required for nuclear localization. Interacts with CDK5RAP3. Interacts with RFPL4A and UBE2A. Interacts with INCA1. Ubiquitinated by the SCF(NIPA) complex during interphase, leading to its destruction. Deubiquitinated by USP22 during G2/M phase. In terms of processing, phosphorylated by PLK1 at Ser-133 on centrosomes during prophase: phosphorylation by PLK1 does not cause nuclear import. Phosphorylation at Ser-147 was also reported to be mediated by PLK1 but Ser-133 seems to be the primary phosphorylation site.

The protein localises to the cytoplasm. It is found in the nucleus. The protein resides in the cytoskeleton. Its subcellular location is the microtubule organizing center. It localises to the centrosome. Functionally, essential for the control of the cell cycle at the G2/M (mitosis) transition. In Homo sapiens (Human), this protein is G2/mitotic-specific cyclin-B1 (CCNB1).